We begin with the raw amino-acid sequence, 474 residues long: tRNA-2-methylthio-N(6)-dimethylallyladenosine synthase (474 aa).

The MTTase N-terminal domain maps to 3–120 (QKLHIKTWGC…LPEMINQIRG (118 aa)). Positions 12, 49, 83, 157, 161, and 164 each coordinate [4Fe-4S] cluster. Residues 143 to 375 (RAEGPTAFVS…QQRINNQAAQ (233 aa)) form the Radical SAM core domain. Residues 378-441 (RAMLGTEQRV…TNSLRGEVVR (64 aa)) enclose the TRAM domain.

The protein belongs to the methylthiotransferase family. MiaB subfamily. In terms of assembly, monomer. Requires [4Fe-4S] cluster as cofactor.

Its subcellular location is the cytoplasm. It catalyses the reaction N(6)-dimethylallyladenosine(37) in tRNA + (sulfur carrier)-SH + AH2 + 2 S-adenosyl-L-methionine = 2-methylsulfanyl-N(6)-dimethylallyladenosine(37) in tRNA + (sulfur carrier)-H + 5'-deoxyadenosine + L-methionine + A + S-adenosyl-L-homocysteine + 2 H(+). Its function is as follows. Catalyzes the methylthiolation of N6-(dimethylallyl)adenosine (i(6)A), leading to the formation of 2-methylthio-N6-(dimethylallyl)adenosine (ms(2)i(6)A) at position 37 in tRNAs that read codons beginning with uridine. The protein is tRNA-2-methylthio-N(6)-dimethylallyladenosine synthase of Pasteurella multocida (strain Pm70).